Reading from the N-terminus, the 253-residue chain is Ubiquinone/menaquinone biosynthesis C-methyltransferase UbiE (253 aa).

S-adenosyl-L-methionine is bound by residues Thr-76, Asp-97, and 125–126 (NA).

It belongs to the class I-like SAM-binding methyltransferase superfamily. MenG/UbiE family.

It catalyses the reaction a 2-demethylmenaquinol + S-adenosyl-L-methionine = a menaquinol + S-adenosyl-L-homocysteine + H(+). The catalysed reaction is a 2-methoxy-6-(all-trans-polyprenyl)benzene-1,4-diol + S-adenosyl-L-methionine = a 5-methoxy-2-methyl-3-(all-trans-polyprenyl)benzene-1,4-diol + S-adenosyl-L-homocysteine + H(+). The protein operates within quinol/quinone metabolism; menaquinone biosynthesis; menaquinol from 1,4-dihydroxy-2-naphthoate: step 2/2. Its pathway is cofactor biosynthesis; ubiquinone biosynthesis. Functionally, methyltransferase required for the conversion of demethylmenaquinol (DMKH2) to menaquinol (MKH2) and the conversion of 2-polyprenyl-6-methoxy-1,4-benzoquinol (DDMQH2) to 2-polyprenyl-3-methyl-6-methoxy-1,4-benzoquinol (DMQH2). This Stenotrophomonas maltophilia (strain K279a) protein is Ubiquinone/menaquinone biosynthesis C-methyltransferase UbiE.